Consider the following 602-residue polypeptide: Glutamate-rich protein 6 (602 aa).

The interval 22 to 67 (LRPRLTSVSSPSLSSTPPPSPLSSPSWSEEELPAPRSDGSPASSIS) is disordered. Low complexity predominate over residues 25–36 (RLTSVSSPSLSS).

It belongs to the ERICH6 family.

The protein resides in the nucleus. The chain is Glutamate-rich protein 6 (Erich6) from Rattus norvegicus (Rat).